A 131-amino-acid polypeptide reads, in one-letter code: Photosystem II extrinsic protein U (131 aa).

Positions 1–28 are cleaved as a signal peptide; it reads MKFISRLLVACSLLIGLMGFLGADLAQA. Positions 29-36 are excised as a propeptide; it reads LTPNPILA.

This sequence belongs to the PsbU family. In terms of assembly, PSII is composed of 1 copy each of membrane proteins PsbA, PsbB, PsbC, PsbD, PsbE, PsbF, PsbH, PsbI, PsbJ, PsbK, PsbL, PsbM, PsbT, PsbX, PsbY, PsbZ, Psb30/Ycf12, peripheral proteins PsbO, CyanoQ (PsbQ), PsbU, PsbV and a large number of cofactors. It forms dimeric complexes.

Its subcellular location is the cellular thylakoid membrane. Its function is as follows. One of the extrinsic, lumenal subunits of photosystem II (PSII). PSII is a light-driven water plastoquinone oxidoreductase, using light energy to abstract electrons from H(2)O, generating a proton gradient subsequently used for ATP formation. The extrinsic proteins stabilize the structure of photosystem II oxygen-evolving complex (OEC), the ion environment of oxygen evolution and protect the OEC against heat-induced inactivation. May modulate the Cl(-) requirement for oxygen evolution. This chain is Photosystem II extrinsic protein U, found in Synechocystis sp. (strain ATCC 27184 / PCC 6803 / Kazusa).